A 218-amino-acid polypeptide reads, in one-letter code: Glutathione S-transferase-like protein OpS6 (218 aa).

One can recognise a GST N-terminal domain in the interval 5–86 (QPIKLYAHKK…YLIEQYDKDG (82 aa)). The 127-residue stretch at 92–218 (SLQDKSLARA…KIAATKAALA (127 aa)) folds into the GST C-terminal domain.

It belongs to the GST superfamily.

It functions in the pathway secondary metabolite biosynthesis. In terms of biological role, glutathione S-transferase-like protein; part of the gene cluster that mediates the biosynthesis of the bibenzoquinone oosporein, a metabolite required for fungal virulence that acts by evading host immunity to facilitate fungal multiplication in insects. The non-reducing polyketide synthase OpS1 produces orsellinic acid by condensing acetyl-CoA with 3 malonyl-CoA units. Orsellinic acid is then hydroxylated to benzenetriol by the hydroxylase OpS4. The intermediate is oxidized either nonenzymatically to 5,5'-dideoxy-oosporein or enzymatically to benzenetetrol by the oxidoreductase OpS7. The latter is further dimerized to oosporein by the catalase OpS5. OpS6 probably functions en route for protecting cells against oxidative stress by scavenging any leaked free radical form of benzenetetrol by activating the thiol group of glutathione. This is Glutathione S-transferase-like protein OpS6 from Beauveria bassiana (strain ARSEF 2860) (White muscardine disease fungus).